A 152-amino-acid chain; its full sequence is Transcriptional repressor NrdR (152 aa).

A zinc finger lies at 3–34 (CPKCTSIEDKVIDSRISKEGSTIRRRRECLEC). The region spanning 49–139 (IVVIKRDGRR…VYKEFRDVSE (91 aa)) is the ATP-cone domain.

It belongs to the NrdR family. Zn(2+) serves as cofactor.

Negatively regulates transcription of bacterial ribonucleotide reductase nrd genes and operons by binding to NrdR-boxes. The sequence is that of Transcriptional repressor NrdR from Opitutus terrae (strain DSM 11246 / JCM 15787 / PB90-1).